A 207-amino-acid chain; its full sequence is Dephospho-CoA kinase (207 aa).

The DPCK domain occupies 12-207; the sequence is LIGITGMIGG…LYSTLLGKML (196 aa). An ATP-binding site is contributed by 20–25; it reads GGGKST.

The protein belongs to the CoaE family.

It localises to the cytoplasm. The catalysed reaction is 3'-dephospho-CoA + ATP = ADP + CoA + H(+). The protein operates within cofactor biosynthesis; coenzyme A biosynthesis; CoA from (R)-pantothenate: step 5/5. Catalyzes the phosphorylation of the 3'-hydroxyl group of dephosphocoenzyme A to form coenzyme A. In Leptospira interrogans serogroup Icterohaemorrhagiae serovar Lai (strain 56601), this protein is Dephospho-CoA kinase.